A 315-amino-acid chain; its full sequence is Glycine--tRNA ligase alpha subunit (315 aa).

Belongs to the class-II aminoacyl-tRNA synthetase family. In terms of assembly, tetramer of two alpha and two beta subunits.

Its subcellular location is the cytoplasm. The enzyme catalyses tRNA(Gly) + glycine + ATP = glycyl-tRNA(Gly) + AMP + diphosphate. This chain is Glycine--tRNA ligase alpha subunit, found in Ectopseudomonas mendocina (strain ymp) (Pseudomonas mendocina).